The chain runs to 234 residues: Lipoprotein-releasing system ATP-binding protein LolD 1 (234 aa).

An ABC transporter domain is found at 5–231 (IEARGIEKVF…RLTSNVRDPG (227 aa)). An ATP-binding site is contributed by 41–48 (GASGSGKS).

The protein belongs to the ABC transporter superfamily. Lipoprotein translocase (TC 3.A.1.125) family. The complex is composed of two ATP-binding proteins (LolD) and two transmembrane proteins (LolC and LolE).

Its subcellular location is the cell inner membrane. In terms of biological role, part of the ABC transporter complex LolCDE involved in the translocation of mature outer membrane-directed lipoproteins, from the inner membrane to the periplasmic chaperone, LolA. Responsible for the formation of the LolA-lipoprotein complex in an ATP-dependent manner. The polypeptide is Lipoprotein-releasing system ATP-binding protein LolD 1 (Caulobacter vibrioides (strain ATCC 19089 / CIP 103742 / CB 15) (Caulobacter crescentus)).